We begin with the raw amino-acid sequence, 483 residues long: Altronate oxidoreductase (483 aa).

18 to 29 contacts NAD(+); sequence IIQFGEGNFLRA.

This sequence belongs to the mannitol dehydrogenase family. UxaB subfamily.

The enzyme catalyses D-altronate + NAD(+) = keto-D-tagaturonate + NADH + H(+). The protein operates within carbohydrate metabolism; pentose and glucuronate interconversion. This chain is Altronate oxidoreductase, found in Yersinia enterocolitica serotype O:8 / biotype 1B (strain NCTC 13174 / 8081).